The following is a 179-amino-acid chain: Large ribosomal subunit protein uL6 (179 aa).

This sequence belongs to the universal ribosomal protein uL6 family. Part of the 50S ribosomal subunit.

In terms of biological role, this protein binds to the 23S rRNA, and is important in its secondary structure. It is located near the subunit interface in the base of the L7/L12 stalk, and near the tRNA binding site of the peptidyltransferase center. The sequence is that of Large ribosomal subunit protein uL6 from Legionella pneumophila (strain Paris).